The sequence spans 259 residues: Steroidogenic acute regulatory-like protein 1 (259 aa).

The first 20 residues, 1–20, serve as a signal peptide directing secretion; the sequence is MTLLPFTCLILLYSLGSVMS. The START domain occupies 43 to 254; the sequence is YATALKTCGE…NRRHFQNLKA (212 aa).

The polypeptide is Steroidogenic acute regulatory-like protein 1 (strl-1) (Caenorhabditis elegans).